The chain runs to 413 residues: Multifunctional CCA protein (413 aa).

G8 and R11 together coordinate ATP. 2 residues coordinate CTP: G8 and R11. D21 and D23 together coordinate Mg(2+). ATP contacts are provided by R91, R143, and R146. Residues R91, R143, and R146 each contribute to the CTP site. An HD domain is found at 232–333; it reads TGVHVMMVID…VRLLERADAL (102 aa).

The protein belongs to the tRNA nucleotidyltransferase/poly(A) polymerase family. Bacterial CCA-adding enzyme type 1 subfamily. As to quaternary structure, monomer. Can also form homodimers and oligomers. The cofactor is Mg(2+). It depends on Ni(2+) as a cofactor.

The catalysed reaction is a tRNA precursor + 2 CTP + ATP = a tRNA with a 3' CCA end + 3 diphosphate. The enzyme catalyses a tRNA with a 3' CCA end + 2 CTP + ATP = a tRNA with a 3' CCACCA end + 3 diphosphate. In terms of biological role, catalyzes the addition and repair of the essential 3'-terminal CCA sequence in tRNAs without using a nucleic acid template. Adds these three nucleotides in the order of C, C, and A to the tRNA nucleotide-73, using CTP and ATP as substrates and producing inorganic pyrophosphate. tRNA 3'-terminal CCA addition is required both for tRNA processing and repair. Also involved in tRNA surveillance by mediating tandem CCA addition to generate a CCACCA at the 3' terminus of unstable tRNAs. While stable tRNAs receive only 3'-terminal CCA, unstable tRNAs are marked with CCACCA and rapidly degraded. This is Multifunctional CCA protein from Burkholderia pseudomallei (strain 668).